A 420-amino-acid chain; its full sequence is Gamma-glutamyl phosphate reductase (420 aa).

The protein belongs to the gamma-glutamyl phosphate reductase family.

It localises to the cytoplasm. It catalyses the reaction L-glutamate 5-semialdehyde + phosphate + NADP(+) = L-glutamyl 5-phosphate + NADPH + H(+). Its pathway is amino-acid biosynthesis; L-proline biosynthesis; L-glutamate 5-semialdehyde from L-glutamate: step 2/2. In terms of biological role, catalyzes the NADPH-dependent reduction of L-glutamate 5-phosphate into L-glutamate 5-semialdehyde and phosphate. The product spontaneously undergoes cyclization to form 1-pyrroline-5-carboxylate. In Streptococcus pneumoniae serotype 4 (strain ATCC BAA-334 / TIGR4), this protein is Gamma-glutamyl phosphate reductase.